Consider the following 178-residue polypeptide: MAETRTIARPYAEAVFKLAKNQNDLARWADTLQLAAAVAADENVRSLIGNPKISSRKLGELFLSVCGNRLNEEGRNFILLLAENGRLEILPEVNELYEQLKTRHEGVLDAKVISAFAMSDAQLKDLVTDLEAKFKRKIEAKVSVDADLIGGVIVEIGDEVLDASVRGKLEAMAVALKS.

The protein belongs to the ATPase delta chain family. F-type ATPases have 2 components, F(1) - the catalytic core - and F(0) - the membrane proton channel. F(1) has five subunits: alpha(3), beta(3), gamma(1), delta(1), epsilon(1). F(0) has three main subunits: a(1), b(2) and c(10-14). The alpha and beta chains form an alternating ring which encloses part of the gamma chain. F(1) is attached to F(0) by a central stalk formed by the gamma and epsilon chains, while a peripheral stalk is formed by the delta and b chains.

It localises to the cell inner membrane. Its function is as follows. F(1)F(0) ATP synthase produces ATP from ADP in the presence of a proton or sodium gradient. F-type ATPases consist of two structural domains, F(1) containing the extramembraneous catalytic core and F(0) containing the membrane proton channel, linked together by a central stalk and a peripheral stalk. During catalysis, ATP synthesis in the catalytic domain of F(1) is coupled via a rotary mechanism of the central stalk subunits to proton translocation. Functionally, this protein is part of the stalk that links CF(0) to CF(1). It either transmits conformational changes from CF(0) to CF(1) or is implicated in proton conduction. The protein is ATP synthase subunit delta of Nitrosospira multiformis (strain ATCC 25196 / NCIMB 11849 / C 71).